Reading from the N-terminus, the 85-residue chain is Large ribosomal subunit protein bL27 (85 aa).

Positions 1-22 (MAHKKGQGSSRNGRDSPGQHRG) are disordered.

It belongs to the bacterial ribosomal protein bL27 family.

This chain is Large ribosomal subunit protein bL27, found in Anaeromyxobacter sp. (strain Fw109-5).